A 517-amino-acid chain; its full sequence is Rop guanine nucleotide exchange factor 9 (517 aa).

2 disordered regions span residues 16 to 76 (NLDR…SETE) and 428 to 517 (GEET…KDRH). Positions 39–63 (MPESQTQDSLGGSPVETSRPMTSRL) are enriched in polar residues. The PRONE domain maps to 65-429 (SRRQDKQQSE…SLARKQCTGE (365 aa)). A compositionally biased stretch (basic and acidic residues) spans 66 to 76 (RRQDKQQSETE). Residues 440 to 452 (ETDSASAGSSNYS) show a composition bias toward polar residues.

As to quaternary structure, interacts with ARAC11/ROP1 and ARAC10/ROP11. Interacts with PRK6. In terms of tissue distribution, expressed in pollen grains and pollen tubes.

The protein localises to the cell membrane. In terms of biological role, guanine-nucleotide exchange factor (GEF) that acts as an activator of Rop (Rho of plants) GTPases by promoting the exchange of GDP for GTP. The sequence is that of Rop guanine nucleotide exchange factor 9 from Arabidopsis thaliana (Mouse-ear cress).